A 655-amino-acid polypeptide reads, in one-letter code: Very long-chain specific acyl-CoA dehydrogenase, mitochondrial (655 aa).

Residues 1-40 (MQSARMTPSVGRQLLRLGARSSRSAALQGQPRPTSAQRLY) constitute a mitochondrion transit peptide. Residues 1–70 (MQSARMTPSV…TREKPARAES (70 aa)) are disordered. Over residues 21–37 (SSRSAALQGQPRPTSAQ) the composition is skewed to polar residues. The interval 41 to 482 (ASEATQAVLE…ALQGCMDKGK (442 aa)) is catalytic. At Lys51 the chain carries N6-acetyllysine. A compositionally biased stretch (basic and acidic residues) spans 60 to 70 (STREKPARAES). Residues Lys71 and Lys127 each carry the N6-acetyllysine; alternate modification. Residues Lys71 and Lys127 each carry the N6-succinyllysine; alternate modification. Lys195 carries the post-translational modification N6-succinyllysine. An FAD-binding site is contributed by 214–223 (FCLTEPSSGS). An S-nitrosocysteine modification is found at Cys237. Residue Lys239 is modified to N6-acetyllysine; alternate. Lys239 is subject to N6-succinyllysine; alternate. 249–251 (WIS) contacts FAD. Residue Lys268 is modified to N6-succinyllysine. N6-acetyllysine; alternate occurs at positions 276 and 278. Residues Lys276 and Lys278 each carry the N6-succinyllysine; alternate modification. Lys298 and Lys316 each carry N6-acetyllysine. N6-acetyllysine; alternate is present on Lys331. An N6-succinyllysine; alternate modification is found at Lys331. Lys372 is modified (N6-succinyllysine). 461-463 (FEG) contributes to the substrate binding site. The active-site Proton acceptor is Glu462. 464 to 466 (TND) contributes to the FAD binding site. At Lys482 the chain carries N6-acetyllysine; alternate. Lys482 carries the N6-succinyllysine; alternate modification. The interval 483–516 (ELTGLGNALKNPLGNVGLLIGEASKQLRRRTGIG) is membrane-anchoring. Phosphoserine is present on residues Ser517 and Ser522. N6-acetyllysine is present on Lys550. At Lys556 the chain carries N6-acetyllysine; alternate. The residue at position 556 (Lys556) is an N6-succinyllysine; alternate. Residue Gln562 participates in FAD binding. Position 639 is an N6-succinyllysine (Lys639).

It belongs to the acyl-CoA dehydrogenase family. In terms of assembly, homodimer. Homodimerizes after import into the mitochondrion. It depends on FAD as a cofactor. In terms of processing, S-nitrosylation at Cys-237 in liver improves catalytic efficiency. As to expression, widely expressed (at protein level).

It is found in the mitochondrion inner membrane. It catalyses the reaction a very-long-chain 2,3-saturated fatty acyl-CoA + oxidized [electron-transfer flavoprotein] + H(+) = a very-long-chain (2E)-enoyl-CoA + reduced [electron-transfer flavoprotein]. The catalysed reaction is dodecanoyl-CoA + oxidized [electron-transfer flavoprotein] + H(+) = (2E)-dodecenoyl-CoA + reduced [electron-transfer flavoprotein]. It carries out the reaction tetradecanoyl-CoA + oxidized [electron-transfer flavoprotein] + H(+) = (2E)-tetradecenoyl-CoA + reduced [electron-transfer flavoprotein]. The enzyme catalyses oxidized [electron-transfer flavoprotein] + hexadecanoyl-CoA + H(+) = (2E)-hexadecenoyl-CoA + reduced [electron-transfer flavoprotein]. It catalyses the reaction octadecanoyl-CoA + oxidized [electron-transfer flavoprotein] + H(+) = (2E)-octadecenoyl-CoA + reduced [electron-transfer flavoprotein]. The catalysed reaction is eicosanoyl-CoA + oxidized [electron-transfer flavoprotein] + H(+) = (2E)-eicosenoyl-CoA + reduced [electron-transfer flavoprotein]. It carries out the reaction docosanoyl-CoA + oxidized [electron-transfer flavoprotein] + H(+) = (2E)-docosenoyl-CoA + reduced [electron-transfer flavoprotein]. The enzyme catalyses tetracosanoyl-CoA + oxidized [electron-transfer flavoprotein] + H(+) = (2E)-tetracosenoyl-CoA + reduced [electron-transfer flavoprotein]. It functions in the pathway lipid metabolism; mitochondrial fatty acid beta-oxidation. Very long-chain specific acyl-CoA dehydrogenase is one of the acyl-CoA dehydrogenases that catalyze the first step of mitochondrial fatty acid beta-oxidation, an aerobic process breaking down fatty acids into acetyl-CoA and allowing the production of energy from fats. The first step of fatty acid beta-oxidation consists in the removal of one hydrogen from C-2 and C-3 of the straight-chain fatty acyl-CoA thioester, resulting in the formation of trans-2-enoyl-CoA. Among the different mitochondrial acyl-CoA dehydrogenases, very long-chain specific acyl-CoA dehydrogenase acts specifically on acyl-CoAs with saturated 12 to 24 carbons long primary chains. The chain is Very long-chain specific acyl-CoA dehydrogenase, mitochondrial from Rattus norvegicus (Rat).